Here is a 1070-residue protein sequence, read N- to C-terminus: Carbamoyl phosphate synthase large chain (1070 aa).

Residues 1 to 401 (MPKRDDIKTI…ALLKAVRSLE (401 aa)) form a carboxyphosphate synthetic domain region. 12 residues coordinate ATP: arginine 129, arginine 169, glycine 175, glycine 176, lysine 208, isoleucine 210, glutamate 215, glycine 241, isoleucine 242, histidine 243, glutamine 284, and glutamate 298. Positions 133–327 (RDLMNELGEP…IAKLAAKIAV (195 aa)) constitute an ATP-grasp 1 domain. Mg(2+) contacts are provided by glutamine 284, glutamate 298, and asparagine 300. Mn(2+) is bound by residues glutamine 284, glutamate 298, and asparagine 300. The interval 402 to 546 (IGADHLLLEE…YSTYEEENES (145 aa)) is oligomerization domain. The segment at 547-929 (TRSAKESVIV…ALYKGFVASG (383 aa)) is carbamoyl phosphate synthetic domain. An ATP-grasp 2 domain is found at 671–861 (EKALEILQIP…MANVATRVIL (191 aa)). Residues arginine 707, arginine 746, valine 748, glutamate 752, glycine 777, valine 778, histidine 779, serine 780, glutamine 820, and glutamate 832 each contribute to the ATP site. Mg(2+) contacts are provided by glutamine 820, glutamate 832, and asparagine 834. Mn(2+) contacts are provided by glutamine 820, glutamate 832, and asparagine 834. The region spanning 930–1070 (TTMHDYGTVL…SEVKQPKARV (141 aa)) is the MGS-like domain. Positions 930-1070 (TTMHDYGTVL…SEVKQPKARV (141 aa)) are allosteric domain.

It belongs to the CarB family. As to quaternary structure, composed of two chains; the small (or glutamine) chain promotes the hydrolysis of glutamine to ammonia, which is used by the large (or ammonia) chain to synthesize carbamoyl phosphate. Tetramer of heterodimers (alpha,beta)4. Mg(2+) is required as a cofactor. It depends on Mn(2+) as a cofactor.

It carries out the reaction hydrogencarbonate + L-glutamine + 2 ATP + H2O = carbamoyl phosphate + L-glutamate + 2 ADP + phosphate + 2 H(+). The enzyme catalyses hydrogencarbonate + NH4(+) + 2 ATP = carbamoyl phosphate + 2 ADP + phosphate + 2 H(+). It participates in amino-acid biosynthesis; L-arginine biosynthesis; carbamoyl phosphate from bicarbonate: step 1/1. Its pathway is pyrimidine metabolism; UMP biosynthesis via de novo pathway; (S)-dihydroorotate from bicarbonate: step 1/3. Large subunit of the glutamine-dependent carbamoyl phosphate synthetase (CPSase). CPSase catalyzes the formation of carbamoyl phosphate from the ammonia moiety of glutamine, carbonate, and phosphate donated by ATP, constituting the first step of 2 biosynthetic pathways, one leading to arginine and/or urea and the other to pyrimidine nucleotides. The large subunit (synthetase) binds the substrates ammonia (free or transferred from glutamine from the small subunit), hydrogencarbonate and ATP and carries out an ATP-coupled ligase reaction, activating hydrogencarbonate by forming carboxy phosphate which reacts with ammonia to form carbamoyl phosphate. The protein is Carbamoyl phosphate synthase large chain of Listeria monocytogenes serotype 4a (strain HCC23).